Here is a 686-residue protein sequence, read N- to C-terminus: Chondroitin proteoglycan 1 (686 aa).

An N-terminal signal peptide occupies residues 1 to 18 (MLPKSVLIVAFLVASSSA). Residue Asn-46 is glycosylated (N-linked (GlcNAc...) asparagine). In terms of domain architecture, Chitin-binding type-2 1 spans 63–120 (DTDCSTKEDGLYAIGGCSPQFLTCSGGIARIMDCPANLIYDQRIIACEYSYNVPECSG). Residues Cys-96 and Cys-109 are joined by a disulfide bond. N-linked (GlcNAc...) asparagine glycosylation occurs at Asn-143. A Chitin-binding type-2 2 domain is found at 228–285 (DKTCNGKADGFYSFGQCSDHYIACSNGYTIPMQCPARLSFDEARVICDYTMNVPECQN). Cys-261 and Cys-274 form a disulfide bridge. The interval 284–312 (QNGSGNYEGSAEETTTEASGELPYSNGYG) is disordered. N-linked (GlcNAc...) asparagine glycans are attached at residues Asn-285, Asn-635, and Asn-664. The tract at residues 658-686 (KLRSATNRTSTKEATTRTQNMHAHYHRNH) is disordered.

Its function is as follows. Required for polar body extrusion during cytokinesis in embryo development. Affects cortical granule size. Shown to have roles in meiotic chromosome segregation, osmotic barrier function and polarization in conjunction with cpg-2. Binds chitin. This is Chondroitin proteoglycan 1 (cpg-1) from Caenorhabditis briggsae.